The chain runs to 303 residues: Pseudouridine-5'-phosphate glycosidase (303 aa).

The active-site Proton donor is glutamate 26. Substrate is bound by residues lysine 87 and valine 107. A Mn(2+)-binding site is contributed by aspartate 139. 141–143 contributes to the substrate binding site; it reads SAD. Lysine 160 functions as the Nucleophile in the catalytic mechanism.

Belongs to the pseudouridine-5'-phosphate glycosidase family. Homotrimer. Mn(2+) is required as a cofactor.

It carries out the reaction D-ribose 5-phosphate + uracil = psi-UMP + H2O. In terms of biological role, catalyzes the reversible cleavage of pseudouridine 5'-phosphate (PsiMP) to ribose 5-phosphate and uracil. Functions biologically in the cleavage direction, as part of a pseudouridine degradation pathway. This chain is Pseudouridine-5'-phosphate glycosidase, found in Saccharopolyspora erythraea (strain ATCC 11635 / DSM 40517 / JCM 4748 / NBRC 13426 / NCIMB 8594 / NRRL 2338).